The sequence spans 209 residues: Protein GET1 (209 aa).

Topologically, residues 1 to 3 (MSL) are lumenal. The chain crosses the membrane as a helical span at residues 4–23 (LLVIFLLELVVQLVNTIGAK). Residues 24 to 110 (TINNLLWRFY…SFSRKLTIYR (87 aa)) lie on the Cytoplasmic side of the membrane. Residues 74–101 (WARLQRKHDKLMDELEKKKSQLDAHRTS) adopt a coiled-coil conformation. The helical transmembrane segment at 111-131 (WILTRGMQWFLCFWFSSQPMF) threads the bilayer. At 132–155 (WLPYGWFPYWVEWLVSFPNAPMGS) the chain is on the lumenal side. A helical membrane pass occupies residues 156–172 (VSIVVWQSACSGVLALV). The Cytoplasmic portion of the chain corresponds to 173–209 (IEAVMAVVRYTGGTGMQKQRQPVPAAGGAPGTSKKDL). The disordered stretch occupies residues 188–209 (MQKQRQPVPAAGGAPGTSKKDL).

It belongs to the WRB/GET1 family. As to quaternary structure, interacts with GET3.

The protein resides in the endoplasmic reticulum membrane. Required for the post-translational delivery of tail-anchored (TA) proteins to the endoplasmic reticulum. Acts as a membrane receptor for soluble GET3, which recognizes and selectively binds the transmembrane domain of TA proteins in the cytosol. The polypeptide is Protein GET1 (Chaetomium thermophilum (strain DSM 1495 / CBS 144.50 / IMI 039719) (Thermochaetoides thermophila)).